Reading from the N-terminus, the 160-residue chain is Fimbrial protein (160 aa).

Residues 1–7 (MKSLQKG) constitute a propeptide, leader sequence. Position 8 is an N-methylphenylalanine (Phe8). A helical membrane pass occupies residues 8 to 28 (FTLIELMIVVAIIGILAAFAI).

It belongs to the N-Me-Phe pilin family. In terms of assembly, the pili are polar flexible filaments of about 5.4 nanometers diameter and 2.5 micrometers average length; they consist of only a single polypeptide chain arranged in a helical configuration of five subunits per turn in the assembled pilus.

The protein resides in the fimbrium. The protein localises to the membrane. This chain is Fimbrial protein (fimA), found in Dichelobacter nodosus (Bacteroides nodosus).